The following is a 1316-amino-acid chain: DNA-directed RNA polymerase subunit beta' (1316 aa).

Zn(2+) contacts are provided by Cys-60, Cys-62, Cys-75, and Cys-78. Mg(2+)-binding residues include Asp-535, Asp-537, and Asp-539. 4 residues coordinate Zn(2+): Cys-891, Cys-968, Cys-975, and Cys-978.

The protein belongs to the RNA polymerase beta' chain family. In terms of assembly, the RNAP catalytic core consists of 2 alpha, 1 beta, 1 beta' and 1 omega subunit. When a sigma factor is associated with the core the holoenzyme is formed, which can initiate transcription. Mg(2+) serves as cofactor. Zn(2+) is required as a cofactor.

The catalysed reaction is RNA(n) + a ribonucleoside 5'-triphosphate = RNA(n+1) + diphosphate. Its function is as follows. DNA-dependent RNA polymerase catalyzes the transcription of DNA into RNA using the four ribonucleoside triphosphates as substrates. This Mycobacterium leprae (strain Br4923) protein is DNA-directed RNA polymerase subunit beta'.